The chain runs to 457 residues: Probable mitochondrial-processing peptidase subunit beta (457 aa).

His66 provides a ligand contact to Zn(2+). The active-site Proton acceptor is the Glu69. Positions 70 and 146 each coordinate Zn(2+).

It belongs to the peptidase M16 family. Heterodimer of mas2 (alpha) and qcr1 (beta) subunits, forming the mitochondrial processing protease (MPP) in which mas2 is involved in substrate recognition and binding and qcr1 is the catalytic subunit. Zn(2+) serves as cofactor.

It is found in the mitochondrion matrix. It catalyses the reaction Release of N-terminal transit peptides from precursor proteins imported into the mitochondrion, typically with Arg in position P2.. Binding to mas2 is required for catalytic activity. Its function is as follows. Catalytic subunit of the essential mitochondrial processing protease (MPP), which cleaves the mitochondrial sequence off newly imported precursors proteins. Preferentially, cleaves after an arginine at position P2. This is Probable mitochondrial-processing peptidase subunit beta (qcr1) from Schizosaccharomyces pombe (strain 972 / ATCC 24843) (Fission yeast).